The following is a 172-amino-acid chain: Pollen-specific protein-like At4g18596 (172 aa).

The signal sequence occupies residues 1 to 27 (MASKAIFFFFVSAVCLSSLAGVAIADA). 3 disulfide bridges follow: cysteine 41/cysteine 112, cysteine 44/cysteine 157, and cysteine 65/cysteine 100. N-linked (GlcNAc...) asparagine glycosylation occurs at asparagine 70.

The protein belongs to the Ole e I family.

Its subcellular location is the secreted. In Arabidopsis thaliana (Mouse-ear cress), this protein is Pollen-specific protein-like At4g18596.